We begin with the raw amino-acid sequence, 311 residues long: tRNA dimethylallyltransferase (311 aa).

10–17 is a binding site for ATP; sequence GPTASGKT. 12-17 provides a ligand contact to substrate; sequence TASGKT. 3 interaction with substrate tRNA regions span residues 35-38, 159-163, and 240-245; these read DSAL, QRINR, and RCVGYR.

It belongs to the IPP transferase family. In terms of assembly, monomer. It depends on Mg(2+) as a cofactor.

The enzyme catalyses adenosine(37) in tRNA + dimethylallyl diphosphate = N(6)-dimethylallyladenosine(37) in tRNA + diphosphate. Catalyzes the transfer of a dimethylallyl group onto the adenine at position 37 in tRNAs that read codons beginning with uridine, leading to the formation of N6-(dimethylallyl)adenosine (i(6)A). The sequence is that of tRNA dimethylallyltransferase from Haemophilus influenzae (strain 86-028NP).